The following is a 593-amino-acid chain: Acetyl-coenzyme A transferase nodX (593 aa).

The segment at 572–593 (DEDEQGSGFRSGSGLGSGSIAD) is disordered. Gly residues predominate over residues 580 to 593 (FRSGSGLGSGSIAD).

This sequence belongs to the CoA-transferase III family.

The protein operates within secondary metabolite biosynthesis. In terms of biological role, acetyl-coenzyme A transferase; part of the gene cluster that mediates the biosynthesis of the indole diterpenes nodulisporic acids (NA). Nodulisporic acid A (NAA) and its chemically modified derivatives are of particular significance because of their highly potent insecticidal activity against blood-feeding arthropods and lack of observable adverse effects on mammals, in particular the tremogenicity associated with the paspaline-derived IDTs is not observed. The geranylgeranyl diphosphate (GGPP) synthase ggs1, localized outside of the cluster, is proposed to catalyze the first step in nodulisporic acid biosynthesis via conversion of farnesyl pyrophosphate and isopentyl pyrophosphate into geranylgeranyl pyrophosphate (GGPP). Condensation of indole-3-glycerol phosphate with GGPP by the prenyl transferase nodC then forms 3-geranylgeranylindole (3-GGI). Epoxidation by the FAD-dependent monooxygenase nodM leads to a single-epoxidized-GGI that is substrate of the terpene cyclase nodB for cyclization to yield emindole SB. The terminal methyl carbon, C28, of emindole SB is then oxidized by the cytochrome P450 monooxygenase nodW to produce nodulisporic acid F (NAF), the pentacyclic core of NAA. NAF is converted to nodulisporic acid E (NAE) via prenylation. This step is probably performed by one of the indole diterpene prenyltransferases nodD1 or nodD2. Several oxidation steps performed by the FAD-linked oxidoreductase nodO and one of the cytochrome P450 monooxygenase nodR, nodX or nodZ further convert NAE to nodulisporic acid D (NAD). NAD is substrate of cytochrome P450 monooxygenase nodJ to produce the precursor of nodulisporic acid C (NAC), converted to NAC by one of the indole diterpene prenyltransferases nodD1 or nodD2. The FAD-dependent monooxygenase nodY2 then oxidizes NAC to nodulisporic acid B (NAB). Finally NAB is converted to NAA by one of the cytochrome P450 monooxygenases nodR, nodX or nodZ. This chain is Acetyl-coenzyme A transferase nodX, found in Hypoxylon pulicicidum.